Here is a 233-residue protein sequence, read N- to C-terminus: Phosphoribosylformylglycinamidine synthase subunit PurQ (233 aa).

A Glutamine amidotransferase type-1 domain is found at 9-233 (RIGIVTFPGS…LSGFLSAFSS (225 aa)). Cys-92 acts as the Nucleophile in catalysis. Residues His-201 and Glu-203 contribute to the active site.

Part of the FGAM synthase complex composed of 1 PurL, 1 PurQ and 2 PurS subunits.

Its subcellular location is the cytoplasm. The catalysed reaction is N(2)-formyl-N(1)-(5-phospho-beta-D-ribosyl)glycinamide + L-glutamine + ATP + H2O = 2-formamido-N(1)-(5-O-phospho-beta-D-ribosyl)acetamidine + L-glutamate + ADP + phosphate + H(+). The enzyme catalyses L-glutamine + H2O = L-glutamate + NH4(+). It participates in purine metabolism; IMP biosynthesis via de novo pathway; 5-amino-1-(5-phospho-D-ribosyl)imidazole from N(2)-formyl-N(1)-(5-phospho-D-ribosyl)glycinamide: step 1/2. In terms of biological role, part of the phosphoribosylformylglycinamidine synthase complex involved in the purines biosynthetic pathway. Catalyzes the ATP-dependent conversion of formylglycinamide ribonucleotide (FGAR) and glutamine to yield formylglycinamidine ribonucleotide (FGAM) and glutamate. The FGAM synthase complex is composed of three subunits. PurQ produces an ammonia molecule by converting glutamine to glutamate. PurL transfers the ammonia molecule to FGAR to form FGAM in an ATP-dependent manner. PurS interacts with PurQ and PurL and is thought to assist in the transfer of the ammonia molecule from PurQ to PurL. In Frankia casuarinae (strain DSM 45818 / CECT 9043 / HFP020203 / CcI3), this protein is Phosphoribosylformylglycinamidine synthase subunit PurQ.